We begin with the raw amino-acid sequence, 230 residues long: uncharacterized protein (230 aa).

NADP(+) is bound at residue 10–34 (VVTGASSGIGEAIAKKLSQQGASIV). Residue serine 139 coordinates substrate. Residue tyrosine 152 is the Proton acceptor of the active site.

It belongs to the short-chain dehydrogenases/reductases (SDR) family.

This is an uncharacterized protein from Staphylococcus epidermidis (strain ATCC 12228 / FDA PCI 1200).